A 195-amino-acid polypeptide reads, in one-letter code: Probable nicotinate-nucleotide adenylyltransferase (195 aa).

The protein belongs to the NadD family.

The enzyme catalyses nicotinate beta-D-ribonucleotide + ATP + H(+) = deamido-NAD(+) + diphosphate. It participates in cofactor biosynthesis; NAD(+) biosynthesis; deamido-NAD(+) from nicotinate D-ribonucleotide: step 1/1. Its function is as follows. Catalyzes the reversible adenylation of nicotinate mononucleotide (NaMN) to nicotinic acid adenine dinucleotide (NaAD). The protein is Probable nicotinate-nucleotide adenylyltransferase of Bordetella petrii (strain ATCC BAA-461 / DSM 12804 / CCUG 43448).